The sequence spans 191 residues: Potassium-transporting ATPase KdpC subunit (191 aa).

The chain crosses the membrane as a helical span at residues 7–27 (ASLVLFLSLTLLTGVAYPLLV).

This sequence belongs to the KdpC family. In terms of assembly, the system is composed of three essential subunits: KdpA, KdpB and KdpC.

The protein resides in the cell inner membrane. Its function is as follows. Part of the high-affinity ATP-driven potassium transport (or Kdp) system, which catalyzes the hydrolysis of ATP coupled with the electrogenic transport of potassium into the cytoplasm. This subunit acts as a catalytic chaperone that increases the ATP-binding affinity of the ATP-hydrolyzing subunit KdpB by the formation of a transient KdpB/KdpC/ATP ternary complex. In Methylibium petroleiphilum (strain ATCC BAA-1232 / LMG 22953 / PM1), this protein is Potassium-transporting ATPase KdpC subunit.